A 287-amino-acid chain; its full sequence is Nucleoside kinase (287 aa).

Aspartate 13, asparagine 28, glycine 38, and asparagine 42 together coordinate substrate. Glutamine 102 contacts ATP. Substrate-binding residues include serine 104 and glutamine 150. Residues asparagine 173 and 196 to 201 (TNGERG) each bind ATP. Aspartate 227 serves as a coordination point for substrate. Aspartate 227 functions as the Proton acceptor in the catalytic mechanism.

Belongs to the carbohydrate kinase PfkB family. Homodimer. It depends on Mg(2+) as a cofactor. The cofactor is Co(2+).

The catalysed reaction is adenosine + ATP = AMP + ADP + H(+). The enzyme catalyses cytidine + ATP = CMP + ADP + H(+). It carries out the reaction guanosine + ATP = GMP + ADP + H(+). It catalyses the reaction inosine + ATP = IMP + ADP + H(+). Nucleoside kinase with broad substrate specificity. Catalyzes the phosphorylation of a variety of nucleosides to the corresponding nucleoside 5'-mono-phosphate in the presence of phosphate donors and divalent cations. Displays the most efficient activity with guanosine, followed by inosine, cytidine, and adenosine. Negligible enzymatic activity is detected with thymidine, uridine, and 2-deoxyadenosine. ATP is the most efficient phosphate donor, but can also use GTP and ITP. Shows no sugar kinase activity, since it is unable to phosphorylate ribose, fructose-1-phosphate, or fructose-6-phosphate. In Thermoplasma acidophilum (strain ATCC 25905 / DSM 1728 / JCM 9062 / NBRC 15155 / AMRC-C165), this protein is Nucleoside kinase.